The chain runs to 1244 residues: ATP-dependent helicase/nuclease subunit A (1244 aa).

Residues 4-475 form the UvrD-like helicase ATP-binding domain; that stretch reads KKWTAEQLAA…IGLSKNFRSR (472 aa). Position 25-32 (25-32) interacts with ATP; the sequence is AAAGAGKT. Residues 515–816 form the UvrD-like helicase C-terminal domain; that stretch reads EDVKTATGPV…RIMSIHKSKG (302 aa). A disordered region spans residues 538–559; sequence EQNTDSAEEKLTDGEEQEDLDS.

It belongs to the helicase family. AddA subfamily. In terms of assembly, heterodimer of AddA and AddB/RexB. It depends on Mg(2+) as a cofactor.

The catalysed reaction is Couples ATP hydrolysis with the unwinding of duplex DNA by translocating in the 3'-5' direction.. It catalyses the reaction ATP + H2O = ADP + phosphate + H(+). Functionally, the heterodimer acts as both an ATP-dependent DNA helicase and an ATP-dependent, dual-direction single-stranded exonuclease. Recognizes the chi site generating a DNA molecule suitable for the initiation of homologous recombination. The AddA nuclease domain is required for chi fragment generation; this subunit has the helicase and 3' -&gt; 5' nuclease activities. The protein is ATP-dependent helicase/nuclease subunit A of Desulforamulus reducens (strain ATCC BAA-1160 / DSM 100696 / MI-1) (Desulfotomaculum reducens).